A 93-amino-acid polypeptide reads, in one-letter code: Large ribosomal subunit protein uL23 (93 aa).

It belongs to the universal ribosomal protein uL23 family. Part of the 50S ribosomal subunit. Contacts protein L29, and trigger factor when it is bound to the ribosome.

Functionally, one of the early assembly proteins it binds 23S rRNA. One of the proteins that surrounds the polypeptide exit tunnel on the outside of the ribosome. Forms the main docking site for trigger factor binding to the ribosome. The sequence is that of Large ribosomal subunit protein uL23 from Campylobacter fetus subsp. fetus (strain 82-40).